The chain runs to 995 residues: Pheromone-regulated membrane protein 10 (995 aa).

4 disordered regions span residues 1-217, 253-299, 326-407, and 425-508; these read MSSH…GEKH, GRVL…AVEM, DQSF…YIAP, and NPQD…NPDQ. Residues 74–88 show a composition bias toward low complexity; sequence SNSSTTNNSTESSGS. Residues 110–121 are compositionally biased toward basic and acidic residues; it reads VKGESGDAHEGS. Low complexity predominate over residues 157 to 166; the sequence is SRGSVGSSSS. Residues 170–187 show a composition bias toward basic and acidic residues; it reads KGSDDVNEKETNLDHDYD. Gly residues predominate over residues 259-269; the sequence is GSGGGGGGGLI. The span at 283 to 296 shows a compositional bias: acidic residues; the sequence is EEKEVGGGGEDDGA. A compositionally biased stretch (polar residues) spans 326-347; that stretch reads DQSFTYDEPNQSAGSSRNSTAP. Composition is skewed to basic and acidic residues over residues 359 to 371 and 385 to 396; these read DDHK…DQGK and GNDDPEDQHLLL. The span at 495 to 506 shows a compositional bias: acidic residues; the sequence is EADDEDEDEENP. Helical transmembrane passes span 678–698, 700–720, 726–746, 752–772, 794–814, 833–850, 858–878, 881–901, 906–926, and 965–985; these read VFLY…GGWL, IPVT…VSSM, SVFE…IGSI, FCFS…YIIL, IIYS…FGWV, KYRI…GLIN, PVMM…GKHF, VPEF…NVYS, GMAV…GIAS, and VEVS…VYPF.

It belongs to the ThrE exporter (TC 2.A.79) family.

The protein resides in the membrane. The chain is Pheromone-regulated membrane protein 10 from Pichia sorbitophila (strain ATCC MYA-4447 / BCRC 22081 / CBS 7064 / NBRC 10061 / NRRL Y-12695) (Hybrid yeast).